The following is a 247-amino-acid chain: Acetoacetate decarboxylase (247 aa).

Residue K116 is the Schiff-base intermediate with acetoacetate of the active site.

The protein belongs to the ADC family.

The enzyme catalyses acetoacetate + H(+) = acetone + CO2. Functionally, catalyzes the conversion of acetoacetate to acetone and carbon dioxide. This chain is Acetoacetate decarboxylase, found in Ralstonia nicotianae (strain ATCC BAA-1114 / GMI1000) (Ralstonia solanacearum).